The primary structure comprises 166 residues: Mitochondrial fission process protein 1 (166 aa).

The next 3 helical transmembrane spans lie at 33–53, 78–98, and 125–145; these read SLVKPVVVKFSYVVAFGYVAA, AIAAVDTVLWQTFASVLIPGF, and TVTCLGLATIPFIVHPIDSFV.

The protein belongs to the MTFP1 family.

It is found in the mitochondrion inner membrane. In terms of biological role, involved in the mitochondrial division probably by regulating membrane fission. Loss-of-function leads to apoptosis. In Caenorhabditis elegans, this protein is Mitochondrial fission process protein 1 (mtp-18).